The sequence spans 458 residues: V-type ATP synthase beta chain (458 aa).

This sequence belongs to the ATPase alpha/beta chains family.

Produces ATP from ADP in the presence of a proton gradient across the membrane. The V-type beta chain is a regulatory subunit. This is V-type ATP synthase beta chain from Fusobacterium nucleatum subsp. nucleatum (strain ATCC 25586 / DSM 15643 / BCRC 10681 / CIP 101130 / JCM 8532 / KCTC 2640 / LMG 13131 / VPI 4355).